Consider the following 61-residue polypeptide: MAKTALITKAARKPKFKVRGYTRCQRCGRPHAVFRKFGLCRICVREMAHAGELPGVTKSSW.

The Zn(2+) site is built by C24, C27, C40, and C43.

Belongs to the universal ribosomal protein uS14 family. Zinc-binding uS14 subfamily. Part of the 30S ribosomal subunit. Contacts proteins S3 and S10. Zn(2+) is required as a cofactor.

Binds 16S rRNA, required for the assembly of 30S particles and may also be responsible for determining the conformation of the 16S rRNA at the A site. The chain is Small ribosomal subunit protein uS14B from Kineococcus radiotolerans (strain ATCC BAA-149 / DSM 14245 / SRS30216).